The primary structure comprises 609 residues: DNA polymerase alpha subunit B (609 aa).

Position 155 is a phosphoserine (S155). Phosphothreonine is present on T164. S166 and S168 each carry phosphoserine.

The protein belongs to the DNA polymerase alpha subunit B family. As to quaternary structure, component of the alpha DNA polymerase complex (also known as the alpha DNA polymerase-primase complex) consisting of four subunits: the catalytic subunit PolA1, the regulatory subunit PolA2, and the primase complex subunits Prim1 and Prim2 respectively. PolA1 associates with the DNA primase complex before association with PolA2. Phosphorylated in embryos until cycle 13. Expressed in embryos (at protein level).

The protein resides in the nucleus. Its function is as follows. Accessory subunit of the DNA polymerase alpha complex (also known as the alpha DNA polymerase-primase complex) which plays an essential role in the initiation of DNA synthesis. During the S phase of the cell cycle, the DNA polymerase alpha complex (composed of a catalytic subunit PolA1, an accessory subunit PolA2 and two primase subunits, the catalytic subunit Prim1 and the regulatory subunit Prim2) is recruited to DNA at the replicative forks. The primase subunit of the polymerase alpha complex initiates DNA synthesis by oligomerising short RNA primers on both leading and lagging strands. These primers are initially extended by the polymerase alpha catalytic subunit and subsequently transferred to polymerase delta and polymerase epsilon for processive synthesis on the lagging and leading strand, respectively. This is DNA polymerase alpha subunit B from Drosophila melanogaster (Fruit fly).